The primary structure comprises 147 residues: ATP synthase epsilon chain (147 aa).

This sequence belongs to the ATPase epsilon chain family. F-type ATPases have 2 components, CF(1) - the catalytic core - and CF(0) - the membrane proton channel. CF(1) has five subunits: alpha(3), beta(3), gamma(1), delta(1), epsilon(1). CF(0) has three main subunits: a, b and c.

The protein resides in the cell inner membrane. Functionally, produces ATP from ADP in the presence of a proton gradient across the membrane. This is ATP synthase epsilon chain from Protochlamydia amoebophila (strain UWE25).